A 224-amino-acid chain; its full sequence is UPF0758 protein PST_0473 (224 aa).

One can recognise an MPN domain in the interval 102–224 (ALESPQAVRD…PLSMAEYGWM (123 aa)). Residues histidine 173, histidine 175, and aspartate 186 each coordinate Zn(2+). Positions 173–186 (HNHPSGVAEPSQAD) match the JAMM motif motif.

The protein belongs to the UPF0758 family.

The sequence is that of UPF0758 protein PST_0473 from Stutzerimonas stutzeri (strain A1501) (Pseudomonas stutzeri).